The chain runs to 365 residues: Chorismate synthase (365 aa).

NADP(+)-binding residues include arginine 48 and arginine 54. FMN contacts are provided by residues arginine 131–serine 133, asparagine 243–alanine 244, glycine 288, lysine 303–serine 307, and arginine 329.

It belongs to the chorismate synthase family. Homotetramer. FMNH2 is required as a cofactor.

The enzyme catalyses 5-O-(1-carboxyvinyl)-3-phosphoshikimate = chorismate + phosphate. It functions in the pathway metabolic intermediate biosynthesis; chorismate biosynthesis; chorismate from D-erythrose 4-phosphate and phosphoenolpyruvate: step 7/7. Catalyzes the anti-1,4-elimination of the C-3 phosphate and the C-6 proR hydrogen from 5-enolpyruvylshikimate-3-phosphate (EPSP) to yield chorismate, which is the branch point compound that serves as the starting substrate for the three terminal pathways of aromatic amino acid biosynthesis. This reaction introduces a second double bond into the aromatic ring system. The polypeptide is Chorismate synthase (Rhizobium leguminosarum bv. trifolii (strain WSM2304)).